Here is a 1279-residue protein sequence, read N- to C-terminus: MSISLKINIVGANTVKTLRFAPDMCIQECCTHIFEKTNEGGPDHGLYQAHIEGKQSARWLAMEKTLQFYDINSDQQLDYKKKHRPQKFKLLDGTIKTQLVDESQNVSEIVNSICKKMGIKNPEEYSLMNSAGAWLNNTQILSEQGISENDITVLMKKFFFNDANIDRNDPVQLHLLFVQCRDGIIEGKYPTQREESLALSALQCQVQLGDYNPTKHVPGFLTLKDYLPLQWLKSKGVEKDIFKEHKKLVSMTEVNAKYRYVQLCRSLKTYGMTSFDVKIREYGKKKMVDHILGITREQMLLMLTETKEVIMTHPLKHIKRWAATDKSFTLDFGDHETEYLILQTPNPEQISQLIGGYIEIIMKARKDSSKVIEKEDTAMGVEEVMAVKKGSVANSSSYMGYGAGGGGANQLQPSQQIPITDLKSALRATDLLIGELGGFRSSTGATPQNFTRSFTTLTPQQFKHQLISHTNAMAIAAQGLFQDMTTPPPTGGIAAFQQAITKRAQIIMAELNTVGTAAKNAGYFPDMASFSDEIIGVATKLSESMARLLAIGSTIQGTDCDEKSQKAAQTEIFNVQSLVTLMMAACDNEYVTDSSSKLLIECAKNVSAAIADMLVVGNSKVEFIDDELLLGQIQNTLKSTSLTSDELLSTTENLASTSCHPESRKQITNITQSALNQSNALLTAFKSGEIPEQDYNLLNARVSDIIESVNLINYAMDCSEREYKISITSNGVEVGEGEILAGTNLTEEFATVANDLTNAIMTMRSNLKNPDTVMESYKMVAGHANRLITCTKAVASRADTQSQQRLFNSTNAVFESVANLSNHCRSYIKNPEQEAHTFQIVETAGHLQFLTQNMSTDAGKIACITSLRDYSKEMIAQVSSLISTSRTSSQYLPDANGITLLKGAKDVSDALSKLMVGIKKVVLDPKSEATQMELLTLAQKQSLPPMNLVSTCKRFAPKISDPNQKQRLIFSSDAAAQSVQKLMKAGEAYKRICGHIEIEEALEVFDSTIADLETTEIAIAGGFLDAVSGTTREGAAELLMVAIKDLNKVNNELVTDIRVNPARLGDLVKSATESASSVAISAKTLICATTGKQVQKKLMGITKQLMIDMEQLIRASRSVASNPNDAASELLLDAASNDVSISTAALVGSTANVDCKELDEASADISNLLSLKMGSLESILSQPTEEFAFYVEEIASSTKALNAASQQVVAMARNKNLKGLGASAKITASALSTLVSHAQNAIVLTENEATKNAILASTVALGGQIIGLLDFSKARIANY.

Positions 84-365 (RPQKFKLLDG…GYIEIIMKAR (282 aa)) constitute an FERM domain.

It localises to the cytoplasm. The protein resides in the cytoskeleton. The protein localises to the cell cortex. Actin-binding protein that may be involved in the control of cell motility and chemotaxis. This is Talin-A (talA) from Dictyostelium discoideum (Social amoeba).